The chain runs to 143 residues: uncharacterized protein (143 aa).

The region spanning 24-78 (IRQRREWQNMSQTTLGEAIGVTFQQVQKYEKGVNRVGAGRLQQISKALKVEPSYF) is the HTH cro/C1-type domain. Residues 35 to 54 (QTTLGEAIGVTFQQVQKYEK) constitute a DNA-binding region (H-T-H motif).

This is an uncharacterized protein from Sinorhizobium fredii (strain NBRC 101917 / NGR234).